Reading from the N-terminus, the 289-residue chain is NAD kinase (289 aa).

The active-site Proton acceptor is the Asp-68. NAD(+)-binding positions include 68 to 69 (DG), Lys-73, 142 to 143 (ND), Arg-153, Asp-172, 183 to 188 (TAYSLS), and Gln-243.

It belongs to the NAD kinase family. A divalent metal cation serves as cofactor.

The protein localises to the cytoplasm. The enzyme catalyses NAD(+) + ATP = ADP + NADP(+) + H(+). Involved in the regulation of the intracellular balance of NAD and NADP, and is a key enzyme in the biosynthesis of NADP. Catalyzes specifically the phosphorylation on 2'-hydroxyl of the adenosine moiety of NAD to yield NADP. In Acetivibrio thermocellus (strain ATCC 27405 / DSM 1237 / JCM 9322 / NBRC 103400 / NCIMB 10682 / NRRL B-4536 / VPI 7372) (Clostridium thermocellum), this protein is NAD kinase.